The primary structure comprises 132 residues: Ribosome-binding factor A (132 aa).

The protein belongs to the RbfA family. Monomer. Binds 30S ribosomal subunits, but not 50S ribosomal subunits or 70S ribosomes.

Its subcellular location is the cytoplasm. In terms of biological role, one of several proteins that assist in the late maturation steps of the functional core of the 30S ribosomal subunit. Associates with free 30S ribosomal subunits (but not with 30S subunits that are part of 70S ribosomes or polysomes). Required for efficient processing of 16S rRNA. May interact with the 5'-terminal helix region of 16S rRNA. The sequence is that of Ribosome-binding factor A from Pseudomonas entomophila (strain L48).